A 171-amino-acid polypeptide reads, in one-letter code: Co-chaperone protein HscB (171 aa).

One can recognise a J domain in the interval 2–74; the sequence is DYFTLFGLPA…LMRAEYLLSL (73 aa).

Belongs to the HscB family. As to quaternary structure, interacts with HscA and stimulates its ATPase activity. Interacts with IscU.

In terms of biological role, co-chaperone involved in the maturation of iron-sulfur cluster-containing proteins. Seems to help targeting proteins to be folded toward HscA. The polypeptide is Co-chaperone protein HscB (Shigella boydii serotype 18 (strain CDC 3083-94 / BS512)).